The following is a 429-amino-acid chain: MREELNQGLIDFLKASPTPFHATASLVQRLEAAGYVRLDERETWHTEANGRYYVTRNDSSIVAIKMGRNSPLHDGIRLVGAHTDSPCLRVKPQPELQRQGFWQLGVEVYGGALLAPWFDRDLSLAGRVTFRRDGKVESQLIDFKAPIAIIPNLAIHLNREANQGWAINAQTELPPILAQFAGDERVDFRAVLTDQLAREHGLNADVVLDYELSFYDTQSAAVIGLHGDFIAGARLDNLLSCYAGLQALLNADTEETCVLVCNDHEEVGSCSACGADGPMLEQTLRRLLPEGDEFVRTIQKSLLVSADNAHGVHPNYAEKHDANHGPKLNAGPVIKVNSNQRYATNSETAGFFRHLCMAEEVPVQSFVVRSDMGCGSTIGPITASNLGVRTVDIGLPTFAMHSIRELCGSHDLAHLVKVLSAFYASRELP.

Zn(2+) is bound by residues histidine 82, histidine 156, and histidine 401.

This sequence belongs to the peptidase M18 family. Zn(2+) serves as cofactor.

This Pseudomonas fluorescens (strain Pf0-1) protein is Probable M18 family aminopeptidase 2.